The sequence spans 102 residues: NADH-quinone oxidoreductase subunit K (102 aa).

A run of 3 helical transmembrane segments spans residues 4–24 (IGLNHYLVLSTILFAIGLVGV), 31–51 (LMLFFATEILLNSVNISFAAI), and 65–85 (FFVIAIAASEVAVGLGLLIVW).

This sequence belongs to the complex I subunit 4L family. In terms of assembly, NDH-1 is composed of 14 different subunits. Subunits NuoA, H, J, K, L, M, N constitute the membrane sector of the complex.

The protein resides in the cell inner membrane. The catalysed reaction is a quinone + NADH + 5 H(+)(in) = a quinol + NAD(+) + 4 H(+)(out). In terms of biological role, NDH-1 shuttles electrons from NADH, via FMN and iron-sulfur (Fe-S) centers, to quinones in the respiratory chain. The immediate electron acceptor for the enzyme in this species is believed to be ubiquinone. Couples the redox reaction to proton translocation (for every two electrons transferred, four hydrogen ions are translocated across the cytoplasmic membrane), and thus conserves the redox energy in a proton gradient. The polypeptide is NADH-quinone oxidoreductase subunit K (Sulfurimonas denitrificans (strain ATCC 33889 / DSM 1251) (Thiomicrospira denitrificans (strain ATCC 33889 / DSM 1251))).